The sequence spans 2667 residues: eIF-2-alpha kinase activator GCN1 (2667 aa).

HEAT repeat units lie at residues 19 to 56 (DSFY…HELS), 95 to 132 (QWIF…VKFT), 159 to 198 (SFSL…LQHM), 293 to 330 (DLQS…DFNV), 336 to 375 (LLKS…RSKD), 398 to 439 (SQKL…SISI), 466 to 503 (ELPE…PEAN), and 794 to 832 (LLNE…ELFV). Positions 842-879 (RNDRKVKPKTAEEQRDEESRKRIEEKKKIQSGELEKQE) are disordered. HEAT repeat units follow at residues 929 to 967 (PIIV…LDRS), 985 to 1024 (LSEI…IIKN), 1085 to 1122 (GVET…IYSP), 1199 to 1237 (HMIP…ATAL), 1290 to 1330 (GELL…HMDA), 1333 to 1370 (PKVS…SFKK), 1371 to 1407 (QGDR…VKGL), 1412 to 1450 (LKNY…TIGR), 1454 to 1491 (PYII…QLSG), 1492 to 1529 (HGVK…CAPK), 1533 to 1570 (SCLP…VIRN), 1572 to 1608 (EIQI…HTID), 1610 to 1647 (ASLS…LTEP), 1652 to 1689 (PYLN…GMGE), 1691 to 1728 (NFST…SLDI), 1729 to 1766 (SRFN…SLGD), 1770 to 1807 (PYLP…QFAV), and 1809 to 1845 (GIEV…KLAG). Positions 1853 to 1875 (SNNSSYNAKDDDDDEPGSSGNDI) are disordered. HEAT repeat units follow at residues 1882 to 1919 (ERLG…NTPK), 1923 to 1960 (EILP…KLSD), 1962 to 1998 (ILPE…SAKT), 2002 to 2039 (PYLS…TFGS), 2040 to 2078 (KASN…VRSS), 2080 to 2110 (VLPV…DAGE), 2114 to 2152 (VHLS…SIDE), 2154 to 2190 (GWDT…GNTM), 2193 to 2230 (EYPE…SLKK), and 2264 to 2301 (KGLA…HTSA). The interval 2265 to 2412 (GLASVLPVLI…ISQESKLRAL (148 aa)) is RWDBD region. The stretch at 2326-2348 (QVKSAILQTLSLLISKSPASMKI) is one HEAT 37; degenerate repeat. Residues 2349 to 2385 (FLHQLQPTFIKCLSDSHKNVRTNAASALGLLMTLSSS) form an HEAT 38; degenerate repeat. HEAT repeat units lie at residues 2387–2421 (DQLV…KKPK), 2425–2462 (ATLD…CFTS), 2508–2545 (PNMP…ASPL), and 2546–2583 (TYAK…SNQQ).

Belongs to the GCN1 family. As to quaternary structure, interacts with eif2ak4/gcn2; this interaction stimulates the eif2ak4/gcn2 kinase activity and is impaired by impact upon a variety of stress conditions, such as amino acid depletion, UV-C irradiation, proteasome inhibitor treatment and glucose deprivation. Interacts with impact; this prevents the interaction of gcn1 with eif2ak4/gcn2 and inhibits eif2ak4/gcn2 kinase activity.

It is found in the cytoplasm. In terms of biological role, ribosome collision sensor that activates a translation quality control pathway when a ribosome has stalled during translation. Directly binds to the ribosome and acts as a sentinel for colliding ribosomes. Gcn1 also acts as a positive activator of the integrated stress response (ISR) by mediating activation of eif2ak4/gcn2 in response to amino acid starvation. Interaction with eif2ak4/gcn2 on translating ribosomes stimulates eif2ak4/gcn2 kinase activity, leading to phosphorylation of eukaryotic translation initiation factor 2 (eIF-2-alpha/eif2s1). EIF2S1/eIF-2-alpha phosphorylation converts EIF2S1/eIF-2-alpha into a global protein synthesis inhibitor, leading to a global attenuation of cap-dependent translation, and thus to a reduced overall utilization of amino acids, while concomitantly initiating the preferential translation of ISR-specific mRNAs, such as the transcriptional activator atf4, and hence allowing atf4-mediated reprogramming of amino acid biosynthetic gene expression to alleviate nutrient depletion. The polypeptide is eIF-2-alpha kinase activator GCN1 (Dictyostelium discoideum (Social amoeba)).